Here is a 188-residue protein sequence, read N- to C-terminus: Crossover junction endodeoxyribonuclease RuvC (188 aa).

Residues aspartate 7, glutamate 68, and aspartate 141 contribute to the active site. Aspartate 7, glutamate 68, and aspartate 141 together coordinate Mg(2+).

Belongs to the RuvC family. As to quaternary structure, homodimer which binds Holliday junction (HJ) DNA. The HJ becomes 2-fold symmetrical on binding to RuvC with unstacked arms; it has a different conformation from HJ DNA in complex with RuvA. In the full resolvosome a probable DNA-RuvA(4)-RuvB(12)-RuvC(2) complex forms which resolves the HJ. Mg(2+) is required as a cofactor.

The protein localises to the cytoplasm. The enzyme catalyses Endonucleolytic cleavage at a junction such as a reciprocal single-stranded crossover between two homologous DNA duplexes (Holliday junction).. Its function is as follows. The RuvA-RuvB-RuvC complex processes Holliday junction (HJ) DNA during genetic recombination and DNA repair. Endonuclease that resolves HJ intermediates. Cleaves cruciform DNA by making single-stranded nicks across the HJ at symmetrical positions within the homologous arms, yielding a 5'-phosphate and a 3'-hydroxyl group; requires a central core of homology in the junction. The consensus cleavage sequence is 5'-(A/T)TT(C/G)-3'. Cleavage occurs on the 3'-side of the TT dinucleotide at the point of strand exchange. HJ branch migration catalyzed by RuvA-RuvB allows RuvC to scan DNA until it finds its consensus sequence, where it cleaves and resolves the cruciform DNA. This chain is Crossover junction endodeoxyribonuclease RuvC, found in Mycobacterium tuberculosis (strain ATCC 25177 / H37Ra).